Reading from the N-terminus, the 334-residue chain is Ornithine carbamoyltransferase (334 aa).

Carbamoyl phosphate is bound by residues serine 57 to threonine 60, glutamine 84, arginine 108, and histidine 135 to glutamine 138. Residues asparagine 169, aspartate 233, and serine 237–methionine 238 each bind L-ornithine. Residues cysteine 275–leucine 276 and arginine 320 contribute to the carbamoyl phosphate site.

This sequence belongs to the aspartate/ornithine carbamoyltransferase superfamily. OTCase family.

The protein resides in the cytoplasm. The catalysed reaction is carbamoyl phosphate + L-ornithine = L-citrulline + phosphate + H(+). The protein operates within amino-acid biosynthesis; L-arginine biosynthesis; L-arginine from L-ornithine and carbamoyl phosphate: step 1/3. In terms of biological role, reversibly catalyzes the transfer of the carbamoyl group from carbamoyl phosphate (CP) to the N(epsilon) atom of ornithine (ORN) to produce L-citrulline. This chain is Ornithine carbamoyltransferase (argF), found in Pasteurella multocida (strain Pm70).